We begin with the raw amino-acid sequence, 662 residues long: Pro-neuregulin-1, membrane-bound isoform (662 aa).

A propeptide spanning residues 1–13 (MSERKEGRGKGKG) is cleaved from the precursor. A disordered region spans residues 1 to 52 (MSERKEGRGKGKGKKKDRGSRGKPGPAEGDPSPALPPRLKEMKSQESAAGSK). The Extracellular portion of the chain corresponds to 14–265 (KKKDRGSRGK…SKAEELYQKR (252 aa)). Residues 37–128 (PRLKEMKSQE…GNDSASANIT (92 aa)) enclose the Ig-like C2-type domain. Cysteine 57 and cysteine 112 are oxidised to a cystine. Residues asparagine 120, asparagine 126, and asparagine 164 are each glycosylated (N-linked (GlcNAc...) asparagine). One can recognise an EGF-like domain in the interval 178 to 222 (HLIKCAEKEKTFCVNGGECFTVKDLSNPSRYLCKCPNEFTGDRCQ). Cystine bridges form between cysteine 182–cysteine 196, cysteine 190–cysteine 210, and cysteine 212–cysteine 221. The helical transmembrane segment at 266–288 (VLTITGICIALLVVGIMCVVAYC) threads the bilayer. Residues 289–662 (KTKKQRQKLH…VIANQDPIAV (374 aa)) are Cytoplasmic-facing. The segment covering 358 to 373 (SHYTSTAHHSTTVTQT) has biased composition (low complexity). 3 disordered regions span residues 358–383 (SHYT…NGHT), 398–480 (SVEN…PVSS), and 547–610 (YETT…DTPF). The span at 374-383 (PSHSWSNGHT) shows a compositional bias: polar residues. Residues 410–420 (GPRGRLHGLGG) show a composition bias toward gly residues. Positions 425–445 (SFLRHARETPDSYRDSPHSER) are enriched in basic and acidic residues. Over residues 564–574 (TNSRRAKRTKP) the composition is skewed to basic residues. The span at 585–596 (DSNTSSVSSNSE) shows a compositional bias: low complexity.

The protein belongs to the neuregulin family. The cytoplasmic domain interacts with the LIM domain region of LIMK1. Forms a ternary complex with ERBB3 and ITGAV:ITGB3 or ITGA6:ITGB4. Interacts with NRDC and BACE1. In terms of processing, proteolytic cleavage close to the plasma membrane on the external face leads to the release of the soluble growth factor form. N- and O-glycosylated. Extensive glycosylation precedes the proteolytic cleavage. As to expression, widely expressed. Most tissues contain isoform alpha2A and isoform alpha2B. Isoform Alpha2 and isoform beta2 are the predominant forms in mesenchymal and non-neuronal organs. Isoform Beta1 is enriched in brain and spinal cord, but not in muscle and heart. Isoform Alpha2C is highly expressed in spinal cord, moderately in lung, brain, ovary, and stomach, in low amounts in the kidney, skin and heart and not detected in the liver, spleen, and placenta.

The protein resides in the cell membrane. It localises to the secreted. Its function is as follows. Direct ligand for ERBB3 and ERBB4 tyrosine kinase receptors. Concomitantly recruits ERBB1 and ERBB2 coreceptors, resulting in ligand-stimulated tyrosine phosphorylation and activation of the ERBB receptors. The multiple isoforms perform diverse functions such as inducing growth and differentiation of epithelial, glial, neuronal, and skeletal muscle cells; inducing expression of acetylcholine receptor in synaptic vesicles during the formation of the neuromuscular junction; stimulating lobuloalveolar budding and milk production in the mammary gland and inducing differentiation of mammary tumor cells; stimulating Schwann cell proliferation; implication in the development of the myocardium such as trabeculation of the developing heart. Binds to ERBB4 and ERBB3. Acts as a ligand for integrins and binds (via EGF domain) to integrins ITGAV:ITGB3 or ITGA6:ITGB4. Its binding to integrins and subsequent ternary complex formation with integrins and ERRB3 are essential for NRG1-ERBB signaling. Induces the phosphorylation and activation of MAPK3/ERK1, MAPK1/ERK2 and AKT1, and ligand-dependent ERBB4 endocytosis is essential for the NRG1-mediated activation of these kinases in neurons. The sequence is that of Pro-neuregulin-1, membrane-bound isoform (Nrg1) from Rattus norvegicus (Rat).